A 318-amino-acid polypeptide reads, in one-letter code: tRNA-cytidine(32) 2-sulfurtransferase (318 aa).

The PP-loop motif motif lies at serine 52 to serine 57. Cysteine 127, cysteine 130, and cysteine 218 together coordinate [4Fe-4S] cluster.

It belongs to the TtcA family. As to quaternary structure, homodimer. Mg(2+) is required as a cofactor. Requires [4Fe-4S] cluster as cofactor.

The protein localises to the cytoplasm. It catalyses the reaction cytidine(32) in tRNA + S-sulfanyl-L-cysteinyl-[cysteine desulfurase] + AH2 + ATP = 2-thiocytidine(32) in tRNA + L-cysteinyl-[cysteine desulfurase] + A + AMP + diphosphate + H(+). The protein operates within tRNA modification. Functionally, catalyzes the ATP-dependent 2-thiolation of cytidine in position 32 of tRNA, to form 2-thiocytidine (s(2)C32). The sulfur atoms are provided by the cysteine/cysteine desulfurase (IscS) system. This Actinobacillus pleuropneumoniae serotype 7 (strain AP76) protein is tRNA-cytidine(32) 2-sulfurtransferase.